The chain runs to 1367 residues: DNA polymerase III PolC-type (1367 aa).

The region spanning 358 to 513 is the Exonuclease domain; the sequence is FVVLDFETTG…DDARVTAQVF (156 aa).

It belongs to the DNA polymerase type-C family. PolC subfamily.

Its subcellular location is the cytoplasm. It carries out the reaction DNA(n) + a 2'-deoxyribonucleoside 5'-triphosphate = DNA(n+1) + diphosphate. Its function is as follows. Required for replicative DNA synthesis. This DNA polymerase also exhibits 3' to 5' exonuclease activity. In Thermotoga maritima (strain ATCC 43589 / DSM 3109 / JCM 10099 / NBRC 100826 / MSB8), this protein is DNA polymerase III PolC-type.